Here is a 91-residue protein sequence, read N- to C-terminus: Large ribosomal subunit protein bL27 (91 aa).

It belongs to the bacterial ribosomal protein bL27 family.

In Deinococcus deserti (strain DSM 17065 / CIP 109153 / LMG 22923 / VCD115), this protein is Large ribosomal subunit protein bL27.